Here is an 85-residue protein sequence, read N- to C-terminus: Progonadoliberin-2 (85 aa).

The N-terminal stretch at 1 to 23 is a signal peptide; it reads MCVSRLVLLFGLLLCVGAQLSNA. Q24 is modified (pyrrolidone carboxylic acid). G33 carries the glycine amide modification.

It belongs to the GnRH family.

It localises to the secreted. Functionally, stimulates the secretion of gonadotropins. This chain is Progonadoliberin-2 (gnrh2), found in Dicentrarchus labrax (European seabass).